We begin with the raw amino-acid sequence, 593 residues long: ABC1 family protein lscO (593 aa).

Disordered regions lie at residues 1–29 and 441–467; these read MDVA…GGKK and PYKN…EERK. Basic and acidic residues-rich tracts occupy residues 8 to 22 and 457 to 467; these read MERH…DDGT and QRTKETPEERK.

This sequence belongs to the protein kinase superfamily. ADCK protein kinase family.

ABC1 family protein; part of the gene cluster that mediates the biosynthesis of the lipopeptide antibiotics leucinostatins that show extensive biological activities, including antimalarial, antiviral, antibacterial, antifungal, and antitumor activities, as well as phytotoxic. The function of lcsO within the leucinostatins biosynthesis has not been identified yet. The sequence is that of ABC1 family protein lscO from Purpureocillium lilacinum (Paecilomyces lilacinus).